The chain runs to 263 residues: Endonuclease 8 (263 aa).

The active-site Schiff-base intermediate with DNA is proline 2. Glutamate 3 acts as the Proton donor in catalysis. The active-site Proton donor; for beta-elimination activity is the lysine 53. Positions 70, 125, and 169 each coordinate DNA. The FPG-type zinc-finger motif lies at 229 to 263 (KVFHRDGEPCERCGSIIEKTTLSSRPFYWCPGCQH). Arginine 253 (proton donor; for delta-elimination activity) is an active-site residue.

Belongs to the FPG family. The cofactor is Zn(2+).

The enzyme catalyses 2'-deoxyribonucleotide-(2'-deoxyribose 5'-phosphate)-2'-deoxyribonucleotide-DNA = a 3'-end 2'-deoxyribonucleotide-(2,3-dehydro-2,3-deoxyribose 5'-phosphate)-DNA + a 5'-end 5'-phospho-2'-deoxyribonucleoside-DNA + H(+). In terms of biological role, involved in base excision repair of DNA damaged by oxidation or by mutagenic agents. Acts as a DNA glycosylase that recognizes and removes damaged bases. Has a preference for oxidized pyrimidines, such as thymine glycol, 5,6-dihydrouracil and 5,6-dihydrothymine. Has AP (apurinic/apyrimidinic) lyase activity and introduces nicks in the DNA strand. Cleaves the DNA backbone by beta-delta elimination to generate a single-strand break at the site of the removed base with both 3'- and 5'-phosphates. The polypeptide is Endonuclease 8 (Escherichia coli O17:K52:H18 (strain UMN026 / ExPEC)).